The chain runs to 125 residues: Small ribosomal subunit protein uS13 (125 aa).

This sequence belongs to the universal ribosomal protein uS13 family. In terms of assembly, part of the 30S ribosomal subunit. Forms a loose heterodimer with protein S19. Forms two bridges to the 50S subunit in the 70S ribosome.

Functionally, located at the top of the head of the 30S subunit, it contacts several helices of the 16S rRNA. In the 70S ribosome it contacts the 23S rRNA (bridge B1a) and protein L5 of the 50S subunit (bridge B1b), connecting the 2 subunits; these bridges are implicated in subunit movement. Contacts the tRNAs in the A and P-sites. The sequence is that of Small ribosomal subunit protein uS13 from Rickettsia felis (strain ATCC VR-1525 / URRWXCal2) (Rickettsia azadi).